Reading from the N-terminus, the 233-residue chain is Large ribosomal subunit protein uL1 (233 aa).

The protein belongs to the universal ribosomal protein uL1 family. In terms of assembly, part of the 50S ribosomal subunit.

Its function is as follows. Binds directly to 23S rRNA. The L1 stalk is quite mobile in the ribosome, and is involved in E site tRNA release. In terms of biological role, protein L1 is also a translational repressor protein, it controls the translation of the L11 operon by binding to its mRNA. This is Large ribosomal subunit protein uL1 from Shewanella loihica (strain ATCC BAA-1088 / PV-4).